The chain runs to 324 residues: Polyketide biosynthesis acyltransferase homolog BaeD (324 aa).

Ser-99 is a catalytic residue.

The protein resides in the cytoplasm. Its pathway is antibiotic biosynthesis; bacillaene biosynthesis. Functionally, probably involved in some intermediate steps for the synthesis of the antibiotic polyketide bacillaene which is involved in secondary metabolism. In Bacillus velezensis (strain DSM 23117 / BGSC 10A6 / LMG 26770 / FZB42) (Bacillus amyloliquefaciens subsp. plantarum), this protein is Polyketide biosynthesis acyltransferase homolog BaeD (baeD).